The primary structure comprises 674 residues: Xaa-Pro aminopeptidase 2 (674 aa).

A signal peptide spans 1–21; it reads MARAHWGCCPWLVLLCACAWG. N-linked (GlcNAc...) asparagine glycans are attached at residues N35, N49, and N65. R116 serves as a coordination point for substrate. 2 N-linked (GlcNAc...) asparagine glycosylation sites follow: N278 and N291. Residue H430 coordinates substrate. Residues D450, D461, and H524 each coordinate Zn(2+). Substrate is bound by residues H524, H533, and E555. The Zn(2+) site is built by E555 and E569. A lipid anchor (GPI-anchor amidated alanine) is attached at A649. Positions 650-674 are cleaved as a propeptide — removed in mature form; that stretch reads ARAPDTASWASVLVVSTLAILGWSV.

The protein belongs to the peptidase M24B family. In terms of assembly, homotrimer. Zn(2+) serves as cofactor. N-glycosylated. In terms of tissue distribution, expressed in kidney, lung, heart, placenta, liver, small intestine and colon. No expression in brain, skeletal muscle, pancreas, spleen, thymus, prostate, testis and ovary.

It is found in the cell membrane. It carries out the reaction Release of any N-terminal amino acid, including proline, that is linked to proline, even from a dipeptide or tripeptide.. Its activity is regulated as follows. Inhibited by apstatin and the chelating agent 1,10-phenanthroline. Also inhibited by high concentrations of Zn(2+). Not significantly inhibited by bestatin or phosphoramidon. Functionally, membrane-bound metalloprotease which catalyzes the removal of a penultimate prolyl residue from the N-termini of peptides, such as Arg-Pro-Pro. May play a role in the metabolism of the vasodilator bradykinin. The chain is Xaa-Pro aminopeptidase 2 (XPNPEP2) from Homo sapiens (Human).